The primary structure comprises 420 residues: Signal recognition particle receptor FtsY (420 aa).

Basic and acidic residues predominate over residues aspartate 28–lysine 62. A disordered region spans residues aspartate 28–arginine 118. Low complexity predominate over residues alanine 63–proline 104. Residues glycine 227–threonine 234, aspartate 310–arginine 314, and serine 372–aspartate 375 each bind GTP.

Belongs to the GTP-binding SRP family. FtsY subfamily. In terms of assembly, part of the signal recognition particle protein translocation system, which is composed of SRP and FtsY.

Its subcellular location is the cell membrane. It is found in the cytoplasm. The catalysed reaction is GTP + H2O = GDP + phosphate + H(+). In terms of biological role, involved in targeting and insertion of nascent membrane proteins into the cytoplasmic membrane. Acts as a receptor for the complex formed by the signal recognition particle (SRP) and the ribosome-nascent chain (RNC). The chain is Signal recognition particle receptor FtsY from Bifidobacterium longum (strain NCC 2705).